Consider the following 427-residue polypeptide: Trigger factor (427 aa).

Residues 163-248 (GDTVVIDFVG…IHEVKTKEVP (86 aa)) enclose the PPIase FKBP-type domain.

Belongs to the FKBP-type PPIase family. Tig subfamily.

Its subcellular location is the cytoplasm. The catalysed reaction is [protein]-peptidylproline (omega=180) = [protein]-peptidylproline (omega=0). Involved in protein export. Acts as a chaperone by maintaining the newly synthesized protein in an open conformation. Functions as a peptidyl-prolyl cis-trans isomerase. This is Trigger factor from Streptococcus pyogenes serotype M18 (strain MGAS8232).